A 407-amino-acid polypeptide reads, in one-letter code: MDRIFTNLNLVTMKTDLSTPNDGYQIIQDAMIGVTNGKVEYVGHSCPEIFHGHPDVIDCGNALVTPGFIDCHTHLIFAGNRANEFEQRLQGVPYQDIARQGGGILSTVNATRQASEDELYHLAVQRLEGLKRDGVTTVEIKSGYGLTLYDELKMLRVAKRIAKLPDMKVSSTLLAAHALPPEYKDKPDDYITLICDSIIPTVAEQKLADHVDVFCEGIGFSVEQCQRVFDAALTHELGIKGHTEQLSNLGGSALAASMGADSVDHIEYLDEDGVKSLAKHNTVATLLPGAFYFLRETQLPPIDLLRKHHVPMAISTDFNPGTSPIASLRMMMNMACTLFRLTPEEALRGVTCNAAQALGLQSSRGQISVGMEADFALWQLDSPAELSYRLGVPDLIARVVDGDVFYN.

2 residues coordinate Fe(3+): histidine 72 and histidine 74. Histidine 72 and histidine 74 together coordinate Zn(2+). 4-imidazolone-5-propanoate-binding residues include arginine 81, tyrosine 144, and histidine 177. Residue tyrosine 144 coordinates N-formimidoyl-L-glutamate. Histidine 242 lines the Fe(3+) pocket. Histidine 242 is a Zn(2+) binding site. Glutamine 245 serves as a coordination point for 4-imidazolone-5-propanoate. Aspartate 317 contributes to the Fe(3+) binding site. Residue aspartate 317 coordinates Zn(2+). Positions 319 and 321 each coordinate N-formimidoyl-L-glutamate. Threonine 322 contacts 4-imidazolone-5-propanoate.

The protein belongs to the metallo-dependent hydrolases superfamily. HutI family. Zn(2+) is required as a cofactor. Requires Fe(3+) as cofactor.

It is found in the cytoplasm. The catalysed reaction is 4-imidazolone-5-propanoate + H2O = N-formimidoyl-L-glutamate. It functions in the pathway amino-acid degradation; L-histidine degradation into L-glutamate; N-formimidoyl-L-glutamate from L-histidine: step 3/3. Its function is as follows. Catalyzes the hydrolytic cleavage of the carbon-nitrogen bond in imidazolone-5-propanoate to yield N-formimidoyl-L-glutamate. It is the third step in the universal histidine degradation pathway. The protein is Imidazolonepropionase of Aliivibrio salmonicida (strain LFI1238) (Vibrio salmonicida (strain LFI1238)).